The following is a 170-amino-acid chain: tRNA-splicing endonuclease (170 aa).

Active-site residues include tyrosine 110, histidine 116, and lysine 147.

The protein belongs to the tRNA-intron endonuclease family. Archaeal short subfamily. In terms of assembly, homotetramer; although the tetramer contains four active sites, only two participate in the cleavage. Therefore, it should be considered as a dimer of dimers.

The enzyme catalyses pretRNA = a 3'-half-tRNA molecule with a 5'-OH end + a 5'-half-tRNA molecule with a 2',3'-cyclic phosphate end + an intron with a 2',3'-cyclic phosphate and a 5'-hydroxyl terminus.. Its function is as follows. Endonuclease that removes tRNA introns. Cleaves pre-tRNA at the 5'- and 3'-splice sites to release the intron. The products are an intron and two tRNA half-molecules bearing 2',3' cyclic phosphate and 5'-OH termini. Recognizes a pseudosymmetric substrate in which 2 bulged loops of 3 bases are separated by a stem of 4 bp. The polypeptide is tRNA-splicing endonuclease (Pyrococcus furiosus (strain ATCC 43587 / DSM 3638 / JCM 8422 / Vc1)).